A 694-amino-acid polypeptide reads, in one-letter code: Follicle-stimulating hormone receptor (694 aa).

The signal sequence occupies residues M1–G17. Cystine bridges form between C18–C25 and C23–C32. An LRRNT domain is found at C18–R46. Topologically, residues C18–R367 are extracellular. LRR repeat units follow at residues V49–L72, E73–L97, H98–N118, L119–S143, H144–S169, S170–G192, T193–G216, A217–N240, and L241–D259. Residues N191 and N199 are each glycosylated (N-linked (GlcNAc...) asparagine). A glycan (N-linked (GlcNAc...) asparagine) is linked at N268. Cystine bridges form between C275–C347, C276–C292, C276–C357, and C292–C339. Residue N293 is glycosylated (N-linked (GlcNAc...) asparagine). Y336 is subject to Sulfotyrosine. Residues V368–L388 form a helical membrane-spanning segment. Residues I389–R399 are Cytoplasmic-facing. Residues F400–V422 form a helical membrane-spanning segment. The Extracellular segment spans residues D423–D444. C443 and C518 are joined by a disulfide. A helical transmembrane segment spans residues A445–L466. The Cytoplasmic segment spans residues E467 to H486. A helical transmembrane segment spans residues A487–V509. The Extracellular portion of the chain corresponds to S510–Q529. Residues F530–T551 traverse the membrane as a helical segment. The Cytoplasmic portion of the chain corresponds to H552–R574. A helical membrane pass occupies residues M575–V598. Over K599–K609 the chain is Extracellular. Residues I610–T631 form a helical membrane-spanning segment. The Cytoplasmic portion of the chain corresponds to K632–S694.

It belongs to the G-protein coupled receptor 1 family. FSH/LSH/TSH subfamily. Homotrimer. Functions as a homotrimer binding the FSH hormone heterodimer composed of CGA and FSHB. Interacts with ARRB2. Interacts with APPL2; interaction is independent of follicle stimulating hormone stimulation. N-glycosylated; indirectly required for FSH-binding, possibly via a conformational change that allows high affinity binding of hormone. In terms of processing, sulfated.

The protein resides in the cell membrane. Its function is as follows. G protein-coupled receptor for follitropin, the follicle-stimulating hormone. Through cAMP production activates the downstream PI3K-AKT and ERK1/ERK2 signaling pathways. The protein is Follicle-stimulating hormone receptor (FSHR) of Notamacropus eugenii (Tammar wallaby).